The chain runs to 469 residues: Abscisic acid 8'-hydroxylase CYP707A2 (469 aa).

The helical transmembrane segment at 3-23 threads the bilayer; that stretch reads FVSMLCLFTFISLTLLLIHSI. C414 contacts heme.

This sequence belongs to the cytochrome P450 family. The cofactor is heme. As to expression, expressed at low levels in fruit.

Its subcellular location is the membrane. The catalysed reaction is 2-cis-(+)-abscisate + reduced [NADPH--hemoprotein reductase] + O2 = (+)-8'-hydroxyabscisate + oxidized [NADPH--hemoprotein reductase] + H2O + H(+). The protein operates within plant hormone degradation; abscisic acid degradation. In terms of biological role, negative regulator of fruit ripening involved in the oxidative degradation of abscisic acid (ABA). This chain is Abscisic acid 8'-hydroxylase CYP707A2, found in Solanum lycopersicum (Tomato).